Here is a 472-residue protein sequence, read N- to C-terminus: ATP-dependent rRNA helicase rrp3 (472 aa).

The tract at residues methionine 1–proline 51 is disordered. Over residues alanine 10–aspartate 19 the composition is skewed to basic and acidic residues. Residues alanine 20 to valine 29 are compositionally biased toward polar residues. The short motif at lysine 52 to alanine 80 is the Q motif element. The region spanning isoleucine 83–valine 254 is the Helicase ATP-binding domain. Residue alanine 96–threonine 103 participates in ATP binding. The short motif at aspartate 202–aspartate 205 is the DEAD box element. Residues tyrosine 282–methionine 426 enclose the Helicase C-terminal domain. Positions glycine 451–glycine 472 are disordered. Over residues threonine 452 to arginine 462 the composition is skewed to basic residues.

It belongs to the DEAD box helicase family. DDX47/RRP3 subfamily. In terms of assembly, interacts with the SSU processome.

The protein resides in the nucleus. It catalyses the reaction ATP + H2O = ADP + phosphate + H(+). Its function is as follows. ATP-dependent rRNA helicase required for pre-ribosomal RNA processing. Involved in the maturation of the 35S-pre-rRNA and to its cleavage to mature 18S rRNA. This chain is ATP-dependent rRNA helicase rrp3, found in Neosartorya fischeri (strain ATCC 1020 / DSM 3700 / CBS 544.65 / FGSC A1164 / JCM 1740 / NRRL 181 / WB 181) (Aspergillus fischerianus).